The primary structure comprises 136 residues: Histone H3 (136 aa).

Residues 1–43 (MARTKQTARKSTGGKAPRKQLATKAARKSAPASGGVKKPHRYR) form a disordered region. 2 positions are modified to N6,N6,N6-trimethyllysine; alternate: lysine 5 and lysine 10. An N6,N6-dimethyllysine; alternate mark is found at lysine 5 and lysine 10. Lysine 5 and lysine 10 each carry N6-acetyllysine; alternate. N6-methyllysine; alternate is present on lysine 5. Serine 11 is subject to Phosphoserine. N6-acetyllysine is present on residues lysine 15 and lysine 24. Position 28 is an N6,N6,N6-trimethyllysine; alternate (lysine 28). Lysine 28 carries the N6,N6-dimethyllysine; alternate modification. Lysine 28 carries the N6-methyllysine; alternate modification. Serine 29 is modified (phosphoserine). Position 37 is an N6,N6,N6-trimethyllysine; alternate (lysine 37). The residue at position 37 (lysine 37) is an N6,N6-dimethyllysine; alternate. Lysine 37 is modified (N6-methyllysine; alternate). Residue lysine 80 is modified to N6-methyllysine.

Belongs to the histone H3 family. The nucleosome is a histone octamer containing two molecules each of H2A, H2B, H3 and H4 assembled in one H3-H4 heterotetramer and two H2A-H2B heterodimers. The octamer wraps approximately 147 bp of DNA. Interacts (via N-terminal tail mono-acetylated on Lys-15) with swsn-4 (via Bromo domain); the interaction is direct. Post-translationally, phosphorylated at Ser-11 and Ser-29 during M phase. Phosphorylation of Ser-11 requires air-2 but not air-1. Dephosphorylated by gsp-1 and/or gsp-2 during chromosome segregation. Acetylation is generally linked to gene activation. In terms of processing, methylation at Lys-5 is linked to gene activation and is absent from male inactive X chromosome chromatin. Methylation at Lys-10 is linked to gene repression and is enriched in male inactive X chromosome chromatin. Methylation at Lys-37 occurs on the entire length of autosomes during meiotic prophase. Trimethylation at Lys-10 and Lys-37 is specifically antagonized by jmjd-2. Dimethylation and trimethylation at Lys-28 occurs in all nuclei. The mes-2-mes-3-mes-6 complex may be responsible for Lys-28 methylation in most of the germline and in the early embryo.

The protein resides in the nucleus. It is found in the chromosome. Functionally, core component of nucleosome. Nucleosomes wrap and compact DNA into chromatin, limiting DNA accessibility to the cellular machineries which require DNA as a template. Histones thereby play a central role in transcription regulation, DNA repair, DNA replication and chromosomal stability. DNA accessibility is regulated via a complex set of post-translational modifications of histones, also called histone code, and nucleosome remodeling. In Caenorhabditis elegans, this protein is Histone H3 (his-2).